Consider the following 188-residue polypeptide: uncharacterized protein (188 aa).

The first 18 residues, M1–G18, serve as a signal peptide directing secretion. The N-palmitoyl cysteine moiety is linked to residue C19. C19 carries S-diacylglycerol cysteine lipidation.

It localises to the cell membrane. This is an uncharacterized protein from Sinorhizobium fredii (strain NBRC 101917 / NGR234).